The primary structure comprises 385 residues: tRNA 2-selenouridine synthase (385 aa).

The region spanning 15–138 (FIADTPLIDV…ARQFLISTID (124 aa)) is the Rhodanese domain. The active-site S-selanylcysteine intermediate is cysteine 98.

It belongs to the SelU family. As to quaternary structure, monomer.

It carries out the reaction 5-methylaminomethyl-2-thiouridine(34) in tRNA + selenophosphate + (2E)-geranyl diphosphate + H2O + H(+) = 5-methylaminomethyl-2-selenouridine(34) in tRNA + (2E)-thiogeraniol + phosphate + diphosphate. The enzyme catalyses 5-methylaminomethyl-2-thiouridine(34) in tRNA + (2E)-geranyl diphosphate = 5-methylaminomethyl-S-(2E)-geranyl-thiouridine(34) in tRNA + diphosphate. The catalysed reaction is 5-methylaminomethyl-S-(2E)-geranyl-thiouridine(34) in tRNA + selenophosphate + H(+) = 5-methylaminomethyl-2-(Se-phospho)selenouridine(34) in tRNA + (2E)-thiogeraniol. It catalyses the reaction 5-methylaminomethyl-2-(Se-phospho)selenouridine(34) in tRNA + H2O = 5-methylaminomethyl-2-selenouridine(34) in tRNA + phosphate. Its function is as follows. Involved in the post-transcriptional modification of the uridine at the wobble position (U34) of tRNA(Lys), tRNA(Glu) and tRNA(Gln). Catalyzes the conversion of 2-thiouridine (S2U-RNA) to 2-selenouridine (Se2U-RNA). Acts in a two-step process involving geranylation of 2-thiouridine (S2U) to S-geranyl-2-thiouridine (geS2U) and subsequent selenation of the latter derivative to 2-selenouridine (Se2U) in the tRNA chain. This Nitrosomonas europaea (strain ATCC 19718 / CIP 103999 / KCTC 2705 / NBRC 14298) protein is tRNA 2-selenouridine synthase.